We begin with the raw amino-acid sequence, 265 residues long: Early E4 31 kDa protein (265 aa).

This sequence belongs to the adenoviridae E4 30 to 34 kDa protein family. In terms of assembly, interacts with E1B-55k.

The protein resides in the host nucleus. Its subcellular location is the host cytoplasm. In terms of biological role, plays a major role to prevent cellular inhibition of viral genome replication by nuclear bodies. Assembles an SCF-like E3 ubiquitin ligase complex based on the cellular proteins ELOB, ELOC, CUL5 and RBX1, in cooperation with viral E1B-55K. This viral RING-type ligase ubiquitinates cellular substrates prior to proteasomal degradation: p53/TP53, LIG4, MRE11-RAD50-NBS1 (MRN) complex, ITGA3, DAXX and BLM. This chain is Early E4 31 kDa protein, found in Canine adenovirus serotype 1 (strain RI261) (CAdV-1).